We begin with the raw amino-acid sequence, 512 residues long: Annexin A7 (512 aa).

Over residues 14–38 the composition is skewed to low complexity; that stretch reads GYPGGDPSYPPAAQQAFPGGQFPPA. 2 disordered regions span residues 14 to 62 and 146 to 190; these read GYPG…GYPH and GGFS…AQPT. The segment covering 39–52 has biased composition (gly residues); it reads AGGGAFPPASGGGN. Positions 164-182 are enriched in low complexity; that stretch reads MPGQMPGQMPGQAPSGYPS. Annexin repeat units follow at residues 209–279, 280–351, 364–436, and 440–511; these read FDAL…ALFM, PSTY…SIMA, QQAE…AVLQ, and NRPL…AISG.

The protein belongs to the annexin family.

Functionally, calcium/phospholipid-binding protein which promotes membrane fusion and is involved in exocytosis. The chain is Annexin A7 (anxa7) from Xenopus laevis (African clawed frog).